The chain runs to 448 residues: Probable glycine dehydrogenase (decarboxylating) subunit 1 (448 aa).

This sequence belongs to the GcvP family. N-terminal subunit subfamily. The glycine cleavage system is composed of four proteins: P, T, L and H. In this organism, the P 'protein' is a heterodimer of two subunits.

It carries out the reaction N(6)-[(R)-lipoyl]-L-lysyl-[glycine-cleavage complex H protein] + glycine + H(+) = N(6)-[(R)-S(8)-aminomethyldihydrolipoyl]-L-lysyl-[glycine-cleavage complex H protein] + CO2. Its function is as follows. The glycine cleavage system catalyzes the degradation of glycine. The P protein binds the alpha-amino group of glycine through its pyridoxal phosphate cofactor; CO(2) is released and the remaining methylamine moiety is then transferred to the lipoamide cofactor of the H protein. The polypeptide is Probable glycine dehydrogenase (decarboxylating) subunit 1 (Rhodospirillum rubrum (strain ATCC 11170 / ATH 1.1.1 / DSM 467 / LMG 4362 / NCIMB 8255 / S1)).